The sequence spans 252 residues: Imidazole glycerol phosphate synthase subunit HisF (252 aa).

Catalysis depends on residues aspartate 11 and aspartate 130.

Belongs to the HisA/HisF family. Heterodimer of HisH and HisF.

Its subcellular location is the cytoplasm. The catalysed reaction is 5-[(5-phospho-1-deoxy-D-ribulos-1-ylimino)methylamino]-1-(5-phospho-beta-D-ribosyl)imidazole-4-carboxamide + L-glutamine = D-erythro-1-(imidazol-4-yl)glycerol 3-phosphate + 5-amino-1-(5-phospho-beta-D-ribosyl)imidazole-4-carboxamide + L-glutamate + H(+). It functions in the pathway amino-acid biosynthesis; L-histidine biosynthesis; L-histidine from 5-phospho-alpha-D-ribose 1-diphosphate: step 5/9. Functionally, IGPS catalyzes the conversion of PRFAR and glutamine to IGP, AICAR and glutamate. The HisF subunit catalyzes the cyclization activity that produces IGP and AICAR from PRFAR using the ammonia provided by the HisH subunit. This is Imidazole glycerol phosphate synthase subunit HisF from Bacillus cereus (strain G9842).